A 616-amino-acid chain; its full sequence is Dihydroxy-acid dehydratase (616 aa).

Asp81 contributes to the Mg(2+) binding site. Cys122 lines the [2Fe-2S] cluster pocket. 2 residues coordinate Mg(2+): Asp123 and Lys124. N6-carboxylysine is present on Lys124. Cys195 is a binding site for [2Fe-2S] cluster. Residue Glu491 coordinates Mg(2+). Catalysis depends on Ser517, which acts as the Proton acceptor.

This sequence belongs to the IlvD/Edd family. Homodimer. It depends on [2Fe-2S] cluster as a cofactor. Mg(2+) serves as cofactor.

The enzyme catalyses (2R)-2,3-dihydroxy-3-methylbutanoate = 3-methyl-2-oxobutanoate + H2O. It catalyses the reaction (2R,3R)-2,3-dihydroxy-3-methylpentanoate = (S)-3-methyl-2-oxopentanoate + H2O. It functions in the pathway amino-acid biosynthesis; L-isoleucine biosynthesis; L-isoleucine from 2-oxobutanoate: step 3/4. It participates in amino-acid biosynthesis; L-valine biosynthesis; L-valine from pyruvate: step 3/4. In terms of biological role, functions in the biosynthesis of branched-chain amino acids. Catalyzes the dehydration of (2R,3R)-2,3-dihydroxy-3-methylpentanoate (2,3-dihydroxy-3-methylvalerate) into 2-oxo-3-methylpentanoate (2-oxo-3-methylvalerate) and of (2R)-2,3-dihydroxy-3-methylbutanoate (2,3-dihydroxyisovalerate) into 2-oxo-3-methylbutanoate (2-oxoisovalerate), the penultimate precursor to L-isoleucine and L-valine, respectively. This chain is Dihydroxy-acid dehydratase, found in Escherichia coli O81 (strain ED1a).